The following is a 103-amino-acid chain: Small ribosomal subunit protein uS10 (103 aa).

The protein belongs to the universal ribosomal protein uS10 family. Part of the 30S ribosomal subunit.

Its function is as follows. Involved in the binding of tRNA to the ribosomes. The sequence is that of Small ribosomal subunit protein uS10 from Acetivibrio thermocellus (strain ATCC 27405 / DSM 1237 / JCM 9322 / NBRC 103400 / NCIMB 10682 / NRRL B-4536 / VPI 7372) (Clostridium thermocellum).